A 311-amino-acid polypeptide reads, in one-letter code: Pantothenate synthetase (311 aa).

43–50 (MGALHEGH) is an ATP binding site. His50 serves as the catalytic Proton donor. Gln75 provides a ligand contact to (R)-pantoate. Residue Gln75 coordinates beta-alanine. 161-164 (GEKD) provides a ligand contact to ATP. Gln167 contributes to the (R)-pantoate binding site. Residues Val190 and 198–201 (MSSR) contribute to the ATP site.

It belongs to the pantothenate synthetase family. As to quaternary structure, homodimer.

The protein localises to the cytoplasm. It catalyses the reaction (R)-pantoate + beta-alanine + ATP = (R)-pantothenate + AMP + diphosphate + H(+). The protein operates within cofactor biosynthesis; (R)-pantothenate biosynthesis; (R)-pantothenate from (R)-pantoate and beta-alanine: step 1/1. Functionally, catalyzes the condensation of pantoate with beta-alanine in an ATP-dependent reaction via a pantoyl-adenylate intermediate. The protein is Pantothenate synthetase of Mycolicibacterium vanbaalenii (strain DSM 7251 / JCM 13017 / BCRC 16820 / KCTC 9966 / NRRL B-24157 / PYR-1) (Mycobacterium vanbaalenii).